The chain runs to 194 residues: Orotate phosphoribosyltransferase (194 aa).

5-phospho-alpha-D-ribose 1-diphosphate is bound by residues Lys98 and 122–130 (EDVLTTGGS). Thr126 and Arg154 together coordinate orotate.

The protein belongs to the purine/pyrimidine phosphoribosyltransferase family. PyrE subfamily. Homodimer. It depends on Mg(2+) as a cofactor.

The enzyme catalyses orotidine 5'-phosphate + diphosphate = orotate + 5-phospho-alpha-D-ribose 1-diphosphate. It participates in pyrimidine metabolism; UMP biosynthesis via de novo pathway; UMP from orotate: step 1/2. In terms of biological role, catalyzes the transfer of a ribosyl phosphate group from 5-phosphoribose 1-diphosphate to orotate, leading to the formation of orotidine monophosphate (OMP). The sequence is that of Orotate phosphoribosyltransferase from Deinococcus radiodurans (strain ATCC 13939 / DSM 20539 / JCM 16871 / CCUG 27074 / LMG 4051 / NBRC 15346 / NCIMB 9279 / VKM B-1422 / R1).